Consider the following 343-residue polypeptide: NADH-cytochrome b5 reductase 2 (343 aa).

A helical transmembrane segment spans residues 41-61 (ILLGAAAVGLAGAGAYFFSGA). Residues 92–197 (QGWLSLKLEE…KGPLPKYPWE (106 aa)) enclose the FAD-binding FR-type domain. Position 200 to 235 (200 to 235 (KHKHIALVAGGTGITPMYQLIRAIFNNPDDKTKVTL)) interacts with FAD.

The protein belongs to the flavoprotein pyridine nucleotide cytochrome reductase family. The cofactor is FAD.

The protein localises to the mitochondrion outer membrane. The enzyme catalyses 2 Fe(III)-[cytochrome b5] + NADH = 2 Fe(II)-[cytochrome b5] + NAD(+) + H(+). May mediate the reduction of outer membrane cytochrome b5. The polypeptide is NADH-cytochrome b5 reductase 2 (mcr-1) (Neurospora crassa (strain ATCC 24698 / 74-OR23-1A / CBS 708.71 / DSM 1257 / FGSC 987)).